Reading from the N-terminus, the 313-residue chain is Putative S-adenosyl-L-methionine-dependent methyltransferase MAV_5149 (313 aa).

S-adenosyl-L-methionine-binding positions include D135 and 164–165 (DL).

It belongs to the UPF0677 family.

Exhibits S-adenosyl-L-methionine-dependent methyltransferase activity. The protein is Putative S-adenosyl-L-methionine-dependent methyltransferase MAV_5149 of Mycobacterium avium (strain 104).